Consider the following 331-residue polypeptide: MNYFDLPKIDLHCHLDGSVRPQTIIDLADEQNLTLPSRDINVIKEMMVAPETCPNLDEYLKRFELPGMVMQTAEALERISFELFEDAANENVKYLEVRFGPLLHQVKGLSLDDIMDSVVRGMKRAEAQYDIHGNYILSILRTMPKDQIKAVLEAGAKHLNDGIVAFDLAGSEIPGFCHEFVPYAQYAKELGYRITIHAGEQGAGQNVYDAISLLGAERVGHGIFIHNHPEAYQLVKGEEVALETCPSSNVQTKAVNSLSEHPIKAFYKDGIAVTINTDNRTVSNTTMTDEVRKVVEAFELTEAEYFDIYTISVNNAFTSDAVKQHLLSFAQ.

Positions 12 and 14 each coordinate Zn(2+). Residues histidine 14, aspartate 16, and glycine 170 each contribute to the substrate site. Histidine 197 provides a ligand contact to Zn(2+). Catalysis depends on glutamate 200, which acts as the Proton donor. Aspartate 278 provides a ligand contact to Zn(2+).

It belongs to the metallo-dependent hydrolases superfamily. Adenosine and AMP deaminases family. Adenosine deaminase subfamily. The cofactor is Zn(2+).

It catalyses the reaction adenosine + H2O + H(+) = inosine + NH4(+). It carries out the reaction 2'-deoxyadenosine + H2O + H(+) = 2'-deoxyinosine + NH4(+). Its function is as follows. Catalyzes the hydrolytic deamination of adenosine and 2-deoxyadenosine. The chain is Adenosine deaminase from Vibrio vulnificus (strain YJ016).